The chain runs to 362 residues: MSTTVLPDTWSRRAKRFEGHAKILAVGTATPANWVDQTTYPDFYFRITNSEHLLEHKEKFRRICNKSKIRKRHLVLTEELLKKNPNLCTYNETSLNTRQDTLVSEVPKLGKEAAMKAIKEWGRPISEITHLVFCTTSGVDMPGADFQLTKLLGLNISVKRLMMYQQGCNAGAAMLRLAKDLAENNKGARVLVVCSEVTLSVFRGPSLQQEDNLLAQCLFGDGSAAVIVGTDPRPGLETPLFELVSSAQTIIPDTDSHLKLHLLEMGLTFHCSKAVPSLITQNVEDCLVKAFEPFGISDWNSIFWILHPGGNAILDRVEERLGLGPEKLRASRDVLSEYGNLTSACVLFILDLVRRKSKKQQQ.

Residue Cys-168 is part of the active site.

The protein belongs to the thiolase-like superfamily. Chalcone/stilbene synthases family.

It catalyses the reaction (E)-4-coumaroyl-CoA + 3 malonyl-CoA + 3 H(+) = 2',4,4',6'-tetrahydroxychalcone + 3 CO2 + 4 CoA. The protein operates within secondary metabolite biosynthesis; flavonoid biosynthesis. Functionally, the primary product of this enzyme is 4,2',4',6'-tetrahydroxychalcone (also termed naringenin-chalcone or chalcone) which can under specific conditions spontaneously isomerize into naringenin. This Ipomoea platensis (Morning glory) protein is Chalcone synthase A (CHSA).